A 144-amino-acid polypeptide reads, in one-letter code: MSELFSNDNIFLNVNVNSQNEAIEKAGKALVDSGAVTDAYIQAMKDREQVVSTFMGNGLAIPHGTDEAKTNVIHSGLTLLQIPEGVDWDGEVVKVVVGIAGKDGEHLDLLSKIAITFSEEENVDRIVQAKSAEEIKQVFEEADA.

In terms of domain architecture, PTS EIIA type-2 spans 3-142; the sequence is ELFSNDNIFL…EEIKQVFEEA (140 aa). His-63 serves as the catalytic Tele-phosphohistidine intermediate. His-63 is subject to Phosphohistidine; by HPr.

Homodimer or homotrimer. Seems to be a monomer when not phosphorylated.

It localises to the cytoplasm. The phosphoenolpyruvate-dependent sugar phosphotransferase system (sugar PTS), a major carbohydrate active transport system, catalyzes the phosphorylation of incoming sugar substrates concomitantly with their translocation across the cell membrane. The enzyme II CmtAB PTS system is involved in D-mannitol transport. This Staphylococcus aureus (strain COL) protein is Mannitol-specific phosphotransferase enzyme IIA component (mtlF).